A 406-amino-acid polypeptide reads, in one-letter code: Protein PHYTOCHROME KINASE SUBSTRATE 4 (406 aa).

Over residues 106–119 (SWNSQTGLLSNKNR) the composition is skewed to polar residues. A disordered region spans residues 106–133 (SWNSQTGLLSNKNRQGSDRDGRRSSKKG).

It belongs to the PKS family. Interacts in vitro with PHYA and PHYB. In terms of tissue distribution, expressed in the hypocotyl elongation zone. Not found in the root elongation zone.

Its function is as follows. Modulates phytochrome-mediated control of hypocotyl growth orientation. Involved in PHYA and PHYB signaling. Acts as an inhibitor of asymmetric growth. Not involved in the control of leaf flattening. This Arabidopsis thaliana (Mouse-ear cress) protein is Protein PHYTOCHROME KINASE SUBSTRATE 4 (PKS4).